We begin with the raw amino-acid sequence, 258 residues long: Snake venom serine protease 5 (258 aa).

The N-terminal stretch at 1 to 18 (MVLIRVLANLLILQLSYA) is a signal peptide. A propeptide spanning residues 19–24 (QKSSEL) is cleaved from the precursor. Residues 25–249 (VVGGRPCNIN…HLDWIQNIIA (225 aa)) form the Peptidase S1 domain. 6 disulfide bridges follow: cysteine 31-cysteine 163, cysteine 50-cysteine 66, cysteine 98-cysteine 256, cysteine 142-cysteine 210, cysteine 174-cysteine 189, and cysteine 200-cysteine 225. The N-linked (GlcNAc...) asparagine glycan is linked to asparagine 44. Histidine 65 functions as the Charge relay system in the catalytic mechanism. Residue asparagine 103 is glycosylated (N-linked (GlcNAc...) asparagine). Aspartate 110 (charge relay system) is an active-site residue. N-linked (GlcNAc...) asparagine glycosylation is found at asparagine 121, asparagine 122, asparagine 154, and asparagine 170. Serine 204 functions as the Charge relay system in the catalytic mechanism. N-linked (GlcNAc...) asparagine glycosylation occurs at asparagine 251.

Belongs to the peptidase S1 family. Snake venom subfamily. As to quaternary structure, monomer. As to expression, expressed by the venom gland.

The protein localises to the secreted. Snake venom serine protease that may act in the hemostasis system of the prey. This chain is Snake venom serine protease 5, found in Trimeresurus stejnegeri (Chinese green tree viper).